The sequence spans 153 residues: uncharacterized protein (153 aa).

An N-terminal signal peptide occupies residues 1 to 19 (MRKYIPLVLFIFSWPVLCA). Residues R46, E54, and R88 contribute to the active site.

This sequence belongs to the thermonuclease family.

This is an uncharacterized protein from Escherichia coli.